The sequence spans 248 residues: Trypsin II-P29 (248 aa).

An N-terminal signal peptide occupies residues 1 to 16 (MKFLFLILSCLGAAVA). Positions 17 to 25 (FPGGADDDK) are cleaved as a propeptide — activation peptide. The Peptidase S1 domain occupies 26-246 (IVGGYTCPEH…YVDWIQETIA (221 aa)). Intrachain disulfides connect cysteine 32–cysteine 162, cysteine 50–cysteine 66, cysteine 134–cysteine 235, cysteine 141–cysteine 208, cysteine 173–cysteine 187, and cysteine 198–cysteine 222. Histidine 65 acts as the Charge relay system in catalysis. Ca(2+)-binding residues include glutamate 77, asparagine 79, valine 82, and glutamate 87. The Charge relay system role is filled by aspartate 109. Catalysis depends on serine 202, which acts as the Charge relay system.

This sequence belongs to the peptidase S1 family. It depends on Ca(2+) as a cofactor. In terms of tissue distribution, high levels are seen in the pancreas while lower levels are found in the liver, spleen and thymus.

It localises to the secreted. It is found in the extracellular space. It carries out the reaction Preferential cleavage: Arg-|-Xaa, Lys-|-Xaa.. This is Trypsin II-P29 from Gallus gallus (Chicken).